The sequence spans 173 residues: Mesencephalic astrocyte-derived neurotrophic factor homolog (173 aa).

The first 22 residues, 1-22, serve as a signal peptide directing secretion; it reads MKTWHMVVVIGFLATLAQTSLA. Cystine bridges form between Cys28–Cys114, Cys31–Cys103, Cys61–Cys72, and Cys148–Cys151.

It belongs to the ARMET family.

The protein resides in the secreted. Required during the maturation of the embryonic nervous system for maintenance of neuronal and cuticular connectivity. Essential for maintenance of dopaminergic neurons and dopamine levels. This is Mesencephalic astrocyte-derived neurotrophic factor homolog from Drosophila sechellia (Fruit fly).